Consider the following 333-residue polypeptide: Phosphate acyltransferase (333 aa).

The protein belongs to the PlsX family. In terms of assembly, homodimer. Probably interacts with PlsY.

The protein localises to the cytoplasm. The catalysed reaction is a fatty acyl-[ACP] + phosphate = an acyl phosphate + holo-[ACP]. The protein operates within lipid metabolism; phospholipid metabolism. Catalyzes the reversible formation of acyl-phosphate (acyl-PO(4)) from acyl-[acyl-carrier-protein] (acyl-ACP). This enzyme utilizes acyl-ACP as fatty acyl donor, but not acyl-CoA. The polypeptide is Phosphate acyltransferase (Helicobacter hepaticus (strain ATCC 51449 / 3B1)).